The primary structure comprises 351 residues: MAKIAVFFGGSSTEHSISILTGCFICKTLHTMGHSVKPILLTKDGGWVVPSEYRMSIPFEVSNSPDLFQEEFQKRYGVSRTNQIFSLDADIAFLGLHGGQGEDGTIQGFLEILGIPYTGSGVLASAIAMDKTRANQIFLQSGQKVAPFFEIDKLEYLNSTDAVITKLETLGFPQFLKPVEGGSSVSVYKITNREQLKEKLALIFESDSKVMSQSFLTGIEVSCGVLERYRDGKFKKIALPATEIVPGGEFFDFESKYKQGGSHEITPARISEQEMKRVQELAIAAHRSLGCSGYSRTDFIIVNGEPHILETNTLPGMTETSLIPQQAKAAGISMEEVFSDLIEIGLKRSLY.

The region spanning 135-343 is the ATP-grasp domain; the sequence is NQIFLQSGQK…MEEVFSDLIE (209 aa). ATP is bound at residue 167-222; sequence LETLGFPQFLKPVEGGSSVSVYKITNREQLKEKLALIFESDSKVMSQSFLTGIEVS. Residues D298, E310, and N312 each coordinate Mg(2+).

It belongs to the D-alanine--D-alanine ligase family. Mg(2+) is required as a cofactor. Requires Mn(2+) as cofactor.

Its subcellular location is the cytoplasm. It carries out the reaction 2 D-alanine + ATP = D-alanyl-D-alanine + ADP + phosphate + H(+). It functions in the pathway cell wall biogenesis; peptidoglycan biosynthesis. Its function is as follows. Cell wall formation. The polypeptide is D-alanine--D-alanine ligase (Leptospira interrogans serogroup Icterohaemorrhagiae serovar copenhageni (strain Fiocruz L1-130)).